We begin with the raw amino-acid sequence, 79 residues long: MENLNMDLLYMAAAIMMGLAAIGAAIGIGILGGKFLEGAARQPDLIPLLRTQFFIVMGLVDAIPMIAVGLGLYVMFAVA.

2 helical membrane-spanning segments follow: residues 11–31 (MAAA…IGIL) and 53–73 (FFIV…LGLY).

It belongs to the ATPase C chain family. In terms of assembly, F-type ATPases have 2 components, F(1) - the catalytic core - and F(0) - the membrane proton channel. F(1) has five subunits: alpha(3), beta(3), gamma(1), delta(1), epsilon(1). F(0) has three main subunits: a(1), b(2) and c(10-14). The alpha and beta chains form an alternating ring which encloses part of the gamma chain. F(1) is attached to F(0) by a central stalk formed by the gamma and epsilon chains, while a peripheral stalk is formed by the delta and b chains.

Its subcellular location is the cell inner membrane. In terms of biological role, f(1)F(0) ATP synthase produces ATP from ADP in the presence of a proton or sodium gradient. F-type ATPases consist of two structural domains, F(1) containing the extramembraneous catalytic core and F(0) containing the membrane proton channel, linked together by a central stalk and a peripheral stalk. During catalysis, ATP synthesis in the catalytic domain of F(1) is coupled via a rotary mechanism of the central stalk subunits to proton translocation. Its function is as follows. Key component of the F(0) channel; it plays a direct role in translocation across the membrane. A homomeric c-ring of between 10-14 subunits forms the central stalk rotor element with the F(1) delta and epsilon subunits. The chain is ATP synthase subunit c from Yersinia enterocolitica serotype O:8 / biotype 1B (strain NCTC 13174 / 8081).